Here is a 171-residue protein sequence, read N- to C-terminus: MRIFGIDCGSEITGYGIVECPDGTPRSGQPDLRLIAFGGIRPAKKLTLAERLAFVHRELLTQLAAHQPDLVAVEEVFYSVNAKSALKLGHVRGVALLAAATAGLPIAEYAPLTIKSTVTGYGLAQKEQVQFMVARLLHMPEPPEPADAADALAIAICHIHHAQTIQAQQSR.

Catalysis depends on residues aspartate 7, glutamate 74, and aspartate 147. Mg(2+) contacts are provided by aspartate 7, glutamate 74, and aspartate 147.

This sequence belongs to the RuvC family. Homodimer which binds Holliday junction (HJ) DNA. The HJ becomes 2-fold symmetrical on binding to RuvC with unstacked arms; it has a different conformation from HJ DNA in complex with RuvA. In the full resolvosome a probable DNA-RuvA(4)-RuvB(12)-RuvC(2) complex forms which resolves the HJ. Mg(2+) is required as a cofactor.

Its subcellular location is the cytoplasm. The enzyme catalyses Endonucleolytic cleavage at a junction such as a reciprocal single-stranded crossover between two homologous DNA duplexes (Holliday junction).. Functionally, the RuvA-RuvB-RuvC complex processes Holliday junction (HJ) DNA during genetic recombination and DNA repair. Endonuclease that resolves HJ intermediates. Cleaves cruciform DNA by making single-stranded nicks across the HJ at symmetrical positions within the homologous arms, yielding a 5'-phosphate and a 3'-hydroxyl group; requires a central core of homology in the junction. The consensus cleavage sequence is 5'-(A/T)TT(C/G)-3'. Cleavage occurs on the 3'-side of the TT dinucleotide at the point of strand exchange. HJ branch migration catalyzed by RuvA-RuvB allows RuvC to scan DNA until it finds its consensus sequence, where it cleaves and resolves the cruciform DNA. The chain is Crossover junction endodeoxyribonuclease RuvC from Acidobacterium capsulatum (strain ATCC 51196 / DSM 11244 / BCRC 80197 / JCM 7670 / NBRC 15755 / NCIMB 13165 / 161).